Consider the following 314-residue polypeptide: Serine protease 46 (314 aa).

The region spanning 44–281 (VVNGKVVEVG…FTQWIKRQIG (238 aa)) is the Peptidase S1 domain. Cysteines 69 and 85 form a disulfide. Catalysis depends on charge relay system residues H84 and D130. Disulfide bonds link C164/C239, C197/C219, and C229/C257. The Charge relay system role is filled by S233. Residues 293 to 313 (FLSPFILTGYILLVSLGSLWL) form a helical membrane-spanning segment.

This sequence belongs to the peptidase S1 family.

The protein localises to the membrane. In Rattus norvegicus (Rat), this protein is Serine protease 46 (Prss46).